A 123-amino-acid chain; its full sequence is Small ribosomal subunit protein uS12 (123 aa).

Residue Asp-89 is modified to 3-methylthioaspartic acid.

Belongs to the universal ribosomal protein uS12 family. In terms of assembly, part of the 30S ribosomal subunit. Contacts proteins S8 and S17. May interact with IF1 in the 30S initiation complex.

With S4 and S5 plays an important role in translational accuracy. In terms of biological role, interacts with and stabilizes bases of the 16S rRNA that are involved in tRNA selection in the A site and with the mRNA backbone. Located at the interface of the 30S and 50S subunits, it traverses the body of the 30S subunit contacting proteins on the other side and probably holding the rRNA structure together. The combined cluster of proteins S8, S12 and S17 appears to hold together the shoulder and platform of the 30S subunit. This chain is Small ribosomal subunit protein uS12, found in Nitrobacter winogradskyi (strain ATCC 25391 / DSM 10237 / CIP 104748 / NCIMB 11846 / Nb-255).